We begin with the raw amino-acid sequence, 113 residues long: U11-theraphotoxin-Hhn1a (113 aa).

The first 21 residues, 1–21 (MNTVRVTFLLVFVLAVSLGQA), serve as a signal peptide directing secretion. Positions 22–74 (DKDENRMEMQGKTEQGKSYLDFAENLLLQKLEELEAKLLEEDSEESRNSRQKR) are excised as a propeptide. Intrachain disulfides connect C75–C90, C82–C95, and C89–C110.

Belongs to the neurotoxin 14 (magi-1) family. 01 (HNTX-16) subfamily. Expressed by the venom gland.

The protein localises to the secreted. Probable ion channel inhibitor. This is U11-theraphotoxin-Hhn1a from Cyriopagopus hainanus (Chinese bird spider).